Consider the following 319-residue polypeptide: MITVNEKEHILEQKYRPSTIDECILPAFDKETFKSITSKGKIPHIILHSPSPGTGKTTVAKALCHDVNADMMFVNGSDCKIDFVRGPLTNFASAASFDGRQKVIVIDEFDRSGLAESQRHLRSFMEAYSSNCSIIITANNIDGIIKPLQSRCRVITFGQPTDEDKIEMMKQMIRRLTEICKHEGIAIADMKVVAALVKKNFPDFRKTIGELDSYSSKGVLDAGILSLVTNDRGAIDDVLESLKNKDVKQLRALAPKYAADYSWFVGKLAEEIYSRVTPQSIIRMYEIVGENNQYHGIAANTELHLAYLFIQLACEMQWK.

ATP-binding positions include 12–15 (EQKY), isoleucine 24, 53–58 (GTGKTT), and arginine 205.

It belongs to the Tevenvirinae sliding-clamp-loader large subunit family. As to quaternary structure, the sliding-clamp-loader consists of 4 large subunits and 1 small subunit. Interacts with the sliding clamp; this interaction allows the sliding-clamp-loader to open the sliding clamp. Part of the replicase complex that includes the DNA polymerase, the polymerase clamp, the clamp loader complex, the single-stranded DNA binding protein, the primase, the helicase and the helicase assembly factor.

Forms the sliding-clamp-loader together with the small subunit. Functions as an ATPase enzyme. The clamp loader holds the clamp in an open conformation and places it onto the DNA. 4 ATP molecules must bind to the sliding-clamp-loader before the latter can open the sliding clamp. ATP hydrolysis triggers the detachment of the sliding clamp from the sliding-clamp-loader, freeing the sliding clamp to track along DNA. This Enterobacteria phage T4 (Bacteriophage T4) protein is Sliding-clamp-loader large subunit (44).